A 327-amino-acid polypeptide reads, in one-letter code: Inactive peptidyl-prolyl cis-trans isomerase FKBP6 (327 aa).

The disordered stretch occupies residues 1–20 (MSVFSRLRNGIPPSRDDCQS). The region spanning 54–143 (DASVLVKYSG…LFEIELIDFL (90 aa)) is the PPIase FKBP-type domain. 3 TPR repeats span residues 171–204 (AATE…LHRR), 219–252 (LLVL…DKRN), and 253–286 (AKAL…QPCN).

It belongs to the FKBP6 family. In terms of assembly, interacts with HSP72/HSPA2 and CLTC. Interacts with GAPDH; leading to inhibit GAPDH catalytic activity. Interacts (via TPR repeats) with HSP90.

The protein resides in the cytoplasm. Its subcellular location is the cytosol. It is found in the nucleus. It localises to the chromosome. Its function is as follows. Co-chaperone required during spermatogenesis to repress transposable elements and prevent their mobilization, which is essential for the germline integrity. Acts via the piRNA metabolic process, which mediates the repression of transposable elements during meiosis by forming complexes composed of piRNAs and Piwi proteins and govern the methylation and subsequent repression of transposons. Acts as a co-chaperone via its interaction with HSP90 and is required for the piRNA amplification process, the secondary piRNA biogenesis. May be required together with HSP90 in removal of 16 nucleotide ping-pong by-products from Piwi complexes, possibly facilitating turnover of Piwi complexes. In Rattus norvegicus (Rat), this protein is Inactive peptidyl-prolyl cis-trans isomerase FKBP6 (Fkbp6).